Here is a 499-residue protein sequence, read N- to C-terminus: Phenylalanine--tRNA ligase alpha subunit (499 aa).

L-phenylalanine is bound by residues Thr-333, 372-374, and Tyr-412; that span reads QIE. Glu-414 serves as a coordination point for Mg(2+). L-phenylalanine is bound at residue Phe-436.

The protein belongs to the class-II aminoacyl-tRNA synthetase family. Phe-tRNA synthetase alpha subunit type 2 subfamily. Tetramer of two alpha and two beta subunits. The cofactor is Mg(2+).

Its subcellular location is the cytoplasm. It carries out the reaction tRNA(Phe) + L-phenylalanine + ATP = L-phenylalanyl-tRNA(Phe) + AMP + diphosphate + H(+). This Thermoplasma acidophilum (strain ATCC 25905 / DSM 1728 / JCM 9062 / NBRC 15155 / AMRC-C165) protein is Phenylalanine--tRNA ligase alpha subunit.